Here is a 1242-residue protein sequence, read N- to C-terminus: Structural polyprotein (1242 aa).

Residues 14 to 101 are disordered; that stretch reads WRPRMPPRPW…PKRKPGRRER (88 aa). Residues 26-42 are compositionally biased toward low complexity; sequence RMPTMQRPDQQARQMQQ. Residues 35-66 are host transcription inhibition; that stretch reads QQARQMQQLIAAVSTLALRQNAAAPQRGKKKQ. The Nuclear localization signal signature appears at 59–96; that stretch reads PQRGKKKQPRRKKPKPQPEKPKKQEQKPKQKKAPKRKP. Positions 61–73 are enriched in basic residues; sequence RGKKKQPRRKKPK. Basic and acidic residues predominate over residues 74–86; sequence PQPEKPKKQEQKP. Residues 82–111 form a binding to the viral RNA region; that stretch reads QEQKPKQKKAPKRKPGRRERMCMKIEHDCI. Over residues 87-98 the composition is skewed to basic residues; that stretch reads KQKKAPKRKPGR. The segment at 96 to 110 is ribosome-binding; it reads PGRRERMCMKIEHDC. An intrachain disulfide couples cysteine 110 to cysteine 125. Positions 110 to 258 constitute a Peptidase S3 domain; the sequence is CIFEVKHEGK…KITPEGTVEW (149 aa). Histidine 136 (charge relay system) is an active-site residue. Residues 141–151 carry the Nuclear export signal motif; sequence IDNADLARLSY. The segment at 152–157 is interaction with spike glycoprotein E2; sequence KKSSKY. The active-site Charge relay system is the aspartate 158. Residues 180 to 190 form a dimerization of the capsid protein region; sequence PEGHYNWHYGA. Serine 210 functions as the Charge relay system in the catalytic mechanism. The segment at 216–220 is dimerization of the capsid protein; sequence DNKGP. The interval 259-272 is functions as an uncleaved signal peptide for the precursor of protein E3/E2; the sequence is AASTVTAMCLLTNI. 8 cysteine pairs are disulfide-bonded: cysteine 267/cysteine 276, cysteine 281/cysteine 285, cysteine 284/cysteine 316, cysteine 343/cysteine 449, cysteine 346/cysteine 352, cysteine 415/cysteine 429, cysteine 477/cysteine 589, and cysteine 527/cysteine 544. N-linked (GlcNAc...) asparagine; by host glycosylation occurs at asparagine 271. The Extracellular portion of the chain corresponds to 325–690; the sequence is STANHFNAYK…YYYGLHPTTT (366 aa). Interaction with host Mxra8 receptor stretches follow at residues 350-353 and 386-388; these read HSCH and HDH. Interaction with host Mxra8 receptor regions lie at residues 508 to 511 and 540 to 546; these read QSGN and TINSCTV. Asparagine 586 is a glycosylation site (N-linked (GlcNAc...) asparagine; by host). Residues 691-711 traverse the membrane as a helical segment; it reads IVVVIRVSVVVLLSFAASVYM. The Cytoplasmic segment spans residues 712-746; the sequence is CVVARTKCLTPYALTPGAVVPVTIGVLCCAPKAHA. The tract at residues 714–718 is interaction with the capsid protein; the sequence is VARTK. Residues cysteine 719, cysteine 739, and cysteine 740 are each lipidated (S-palmitoyl cysteine; by host). A transient transmembrane before p62-6K protein processing region spans residues 719–739; sequence CLTPYALTPGAVVPVTIGVLC. The cysteines at positions 719 and 740 are disulfide-linked. Residues 747–761 lie on the Extracellular side of the membrane; the sequence is ASFAEGMAYLWDNNQ. A glycan (N-linked (GlcNAc...) asparagine; by host) is linked at asparagine 760. The chain crosses the membrane as a helical span at residues 762-782; sequence SMFWMELTGPLALLILATCCA. Topologically, residues 783-785 are cytoplasmic; the sequence is RSL. Residues 786–806 form a helical membrane-spanning segment; that stretch reads LSCCKGSFLVAMSIGSAVASA. Topologically, residues 807–1217 are extracellular; that stretch reads YEHTAIIPNQ…STAMTWAQHL (411 aa). Cystine bridges form between cysteine 855–cysteine 920, cysteine 868–cysteine 900, cysteine 869–cysteine 902, and cysteine 874–cysteine 884. Residues 890–907 form an E1 fusion peptide loop region; it reads VYPFMWGGAYCFCDSENT. Asparagine 947 and asparagine 1076 each carry an N-linked (GlcNAc...) asparagine; by host glycan. 4 cysteine pairs are disulfide-bonded: cysteine 1065–cysteine 1077, cysteine 1107–cysteine 1180, cysteine 1112–cysteine 1184, and cysteine 1134–cysteine 1174. The chain crosses the membrane as a helical span at residues 1218–1238; that stretch reads AGGVGLLIALAVLILVIVTCV. Cysteine 1237 carries the S-palmitoyl cysteine; by host lipid modification. Over 1239 to 1242 the chain is Cytoplasmic; it reads TLRR.

As to quaternary structure, homodimer. Homomultimer. Interacts with host karyopherin KPNA4; this interaction allows the nuclear import of the viral capsid protein. Interacts with spike glycoprotein E2. Interacts with host IRAK1; the interaction leads to inhibition of IRAK1-dependent signaling. In terms of assembly, the precursor of protein E3/E2 and E1 form a heterodimer shortly after synthesis. The precursor of protein E3/E2 and E1 form a heterodimer shortly after synthesis. Processing of the precursor of protein E3/E2 into E2 and E3 results in a heterodimer of the spike glycoproteins E2 and E1. Spike at virion surface are constituted of a trimer of E2-E1 heterodimers. After target cell attachment and endocytosis, E1 change conformation to form homotrimers. Interacts with 6K protein. As to quaternary structure, interacts with spike glycoprotein E1. Processing of the precursor of protein E3/E2 into E2 and E3 results in a heterodimer of the spike glycoproteins E2 and E1. Spike at virion surface are constituted of a trimer of E2-E1 heterodimers. Interacts with 6K protein. Interacts with host MXRA8; this interaction mediates virus entry. In terms of assembly, oligomer. Interacts with spike glycoprotein E1. Interacts with spike glycoprotein E2. In terms of processing, structural polyprotein: Specific enzymatic cleavages in vivo yield mature proteins. Capsid protein is auto-cleaved during polyprotein translation, unmasking a signal peptide at the N-terminus of the precursor of E3/E2. The remaining polyprotein is then targeted to the host endoplasmic reticulum, where host signal peptidase cleaves it into pE2, 6K and E1 proteins. pE2 is further processed to mature E3 and E2 by host furin in trans-Golgi vesicle. Post-translationally, palmitoylated via thioester bonds. These palmitoylations may induce disruption of the C-terminus transmembrane. This would result in the reorientation of E2 C-terminus from lumenal to cytoplasmic side. N-glycosylated. In terms of processing, palmitoylated via thioester bonds.

The protein resides in the virion. The protein localises to the host cytoplasm. Its subcellular location is the host cell membrane. It is found in the host nucleus. It localises to the virion membrane. The protein resides in the host Golgi apparatus. The protein localises to the host trans-Golgi network. Its subcellular location is the host endoplasmic reticulum. It catalyses the reaction Autocatalytic release of the core protein from the N-terminus of the togavirus structural polyprotein by hydrolysis of a -Trp-|-Ser- bond.. Forms an icosahedral capsid with a T=4 symmetry composed of 240 copies of the capsid protein surrounded by a lipid membrane through which penetrate 80 spikes composed of trimers of E1-E2 heterodimers. The capsid protein binds to the viral RNA genome at a site adjacent to a ribosome binding site for viral genome translation following genome release. Possesses a protease activity that results in its autocatalytic cleavage from the nascent structural protein. Following its self-cleavage, the capsid protein transiently associates with ribosomes, and within several minutes the protein binds to viral RNA and rapidly assembles into icosahedric core particles. The resulting nucleocapsid eventually associates with the cytoplasmic domain of the spike glycoprotein E2 at the cell membrane, leading to budding and formation of mature virions. In case of infection, new virions attach to target cells and after clathrin-mediated endocytosis their membrane fuses with the host endosomal membrane. This leads to the release of the nucleocapsid into the cytoplasm, followed by an uncoating event necessary for the genomic RNA to become accessible. The uncoating might be triggered by the interaction of capsid proteins with ribosomes. Binding of ribosomes would release the genomic RNA since the same region is genomic RNA-binding and ribosome-binding. Specifically inhibits interleukin-1 receptor-associated kinase 1/IRAK1-dependent signaling during viral entry, representing a means by which the alphaviruses may evade innate immune detection and activation prior to viral gene expression. In terms of biological role, provides the signal sequence for the translocation of the precursor of protein E3/E2 to the host endoplasmic reticulum. Furin-cleaved E3 remains associated with spike glycoprotein E1 and mediates pH protection of the latter during the transport via the secretory pathway. After virion release from the host cell, the assembly protein E3 is gradually released in the extracellular space. Its function is as follows. Plays a role in viral attachment to target host cell, by binding to the cell receptor MXRA8. Synthesized as a p62 precursor which is processed by furin at the cell membrane just before virion budding, giving rise to E2-E1 heterodimer. The p62-E1 heterodimer is stable, whereas E2-E1 is unstable and dissociate at low pH. p62 is processed at the last step, presumably to avoid E1 fusion activation before its final export to cell surface. E2 C-terminus contains a transitory transmembrane that would be disrupted by palmitoylation, resulting in reorientation of the C-terminal tail from lumenal to cytoplasmic side. This step is critical since E2 C-terminus is involved in budding by interacting with capsid proteins. This release of E2 C-terminus in cytoplasm occurs lately in protein export, and precludes premature assembly of particles at the endoplasmic reticulum membrane. Functionally, acts as a viroporin that participates in virus glycoprotein processing and transport to the plasma membrane, cell permeabilization and budding of viral particles. Disrupts the calcium homeostasis of the cell, probably at the endoplasmic reticulum level. This leads to cytoplasmic calcium elevation. Because of its lipophilic properties, the 6K protein is postulated to influence the selection of lipids that interact with the transmembrane domains of the glycoproteins, which, in turn, affects the deformability of the bilayer required for the extreme curvature that occurs as budding proceeds. Present in low amount in virions, about 3% compared to viral glycoproteins. Class II viral fusion protein. Fusion activity is inactive as long as E1 is bound to E2 in mature virion. After virus attachment to target cell via host MXRA8 and endocytosis, acidification of the endosome induce dissociation of E1/E2 heterodimer and concomitant trimerization of the E1 subunits. This E1 trimer is fusion active, and promotes release of viral nucleocapsid in cytoplasm after endosome and viral membrane fusion. Efficient fusion requires the presence of cholesterol and sphingolipid in the target membrane. This chain is Structural polyprotein, found in Mayaro virus (strain Brazil) (MAYV).